The sequence spans 164 residues: ATP synthase subunit b (164 aa).

The helical transmembrane segment at 12–32 (FILVTGSVIVLLLLIKAFAWG) threads the bilayer.

Belongs to the ATPase B chain family. In terms of assembly, F-type ATPases have 2 components, F(1) - the catalytic core - and F(0) - the membrane proton channel. F(1) has five subunits: alpha(3), beta(3), gamma(1), delta(1), epsilon(1). F(0) has three main subunits: a(1), b(2) and c(10-14). The alpha and beta chains form an alternating ring which encloses part of the gamma chain. F(1) is attached to F(0) by a central stalk formed by the gamma and epsilon chains, while a peripheral stalk is formed by the delta and b chains.

The protein localises to the cell membrane. In terms of biological role, f(1)F(0) ATP synthase produces ATP from ADP in the presence of a proton or sodium gradient. F-type ATPases consist of two structural domains, F(1) containing the extramembraneous catalytic core and F(0) containing the membrane proton channel, linked together by a central stalk and a peripheral stalk. During catalysis, ATP synthesis in the catalytic domain of F(1) is coupled via a rotary mechanism of the central stalk subunits to proton translocation. Its function is as follows. Component of the F(0) channel, it forms part of the peripheral stalk, linking F(1) to F(0). This chain is ATP synthase subunit b, found in Streptococcus equi subsp. zooepidemicus (strain MGCS10565).